Reading from the N-terminus, the 92-residue chain is Large ribosomal subunit protein eL43 (92 aa).

Cys39, Cys42, Cys57, and Cys60 together coordinate Zn(2+). The C4-type zinc-finger motif lies at 39 to 60; that stretch reads CSFCGKTKMKRRAVGIWHCGSC.

It belongs to the eukaryotic ribosomal protein eL43 family. In terms of assembly, component of the large ribosomal subunit.

The protein resides in the cytoplasm. Functionally, component of the large ribosomal subunit. The ribosome is a large ribonucleoprotein complex responsible for the synthesis of proteins in the cell. The chain is Large ribosomal subunit protein eL43 (rpl37a) from Ictalurus punctatus (Channel catfish).